A 263-amino-acid polypeptide reads, in one-letter code: Trans-2-decenoyl-[acyl-carrier-protein] isomerase (263 aa).

It belongs to the enoyl-CoA hydratase/isomerase family. In terms of assembly, homotetramer.

The catalysed reaction is (2E)-decenoyl-[ACP] = (3Z)-decenoyl-[ACP]. It functions in the pathway lipid metabolism; fatty acid biosynthesis. In terms of biological role, catalyzes the isomerization of trans-2-decenoyl-ACP to cis-3-decenoyl-ACP. Required for survival at low pH. This chain is Trans-2-decenoyl-[acyl-carrier-protein] isomerase (fabM), found in Streptococcus mutans serotype c (strain ATCC 700610 / UA159).